The following is a 573-amino-acid chain: 60 kDa lysophospholipase (573 aa).

The Asparaginase/glutaminase domain occupies 9 to 355 (RRLLAVYTGG…DVRKELLTKD (347 aa)). The Acyl-ester intermediate role is filled by T19. Residues 41–350 (TLPMFHDEEH…PGLSLDVRKE (310 aa)) are asparaginase. Residues 84 to 86 (DSS) and 116 to 117 (TD) each bind substrate. ANK repeat units lie at residues 141-170 (GAQV…YVIP), 399-429 (ALVP…DLGL), 433-462 (NGQT…DVNT), 466-495 (DGFS…SLST), and 533-562 (DGHS…AVGA).

This sequence in the N-terminal section; belongs to the asparaginase 1 family. Monomer.

It catalyses the reaction a 1-acyl-sn-glycero-3-phosphocholine + H2O = sn-glycerol 3-phosphocholine + a fatty acid + H(+). It carries out the reaction L-asparagine + H2O = L-aspartate + NH4(+). The catalysed reaction is a 1-O-alkyl-2-acetyl-sn-glycero-3-phosphocholine + H2O = a 1-O-alkyl-sn-glycero-3-phosphocholine + acetate + H(+). The enzyme catalyses 1-hexadecanoyl-sn-glycero-3-phosphocholine + H2O = sn-glycerol 3-phosphocholine + hexadecanoate + H(+). It catalyses the reaction 2 1-hexadecanoyl-sn-glycero-3-phosphocholine = 1,2-dihexadecanoyl-sn-glycero-3-phosphocholine + sn-glycerol 3-phosphocholine. It carries out the reaction 1-octadecanoyl-sn-glycero-3-phosphocholine + H2O = octadecanoate + sn-glycerol 3-phosphocholine + H(+). The catalysed reaction is 1-(9Z-octadecenoyl)-sn-glycero-3-phosphocholine + H2O = sn-glycerol 3-phosphocholine + (9Z)-octadecenoate + H(+). The enzyme catalyses 1-hexadecanoyl-sn-glycero-3-phosphoethanolamine + H2O = sn-glycero-3-phosphoethanolamine + hexadecanoate + H(+). It catalyses the reaction 1-(9Z-octadecenoyl)-sn-glycero-3-phosphoethanolamine + H2O = sn-glycero-3-phosphoethanolamine + (9Z)-octadecenoate + H(+). It carries out the reaction 1-hexadecanoyl-sn-glycero-3-phosphoethanolamine + 1-hexadecanoyl-sn-glycero-3-phosphocholine = 1,2-dihexadecanoyl-sn-glycero-3-phosphoethanolamine + sn-glycerol 3-phosphocholine. The catalysed reaction is 2-(5Z,8Z,11Z,14Z)-eicosatetraenoyl-sn-glycero-3-phosphocholine + H2O = sn-glycerol 3-phosphocholine + (5Z,8Z,11Z,14Z)-eicosatetraenoate + H(+). The enzyme catalyses 2-hexadecanoyl-sn-glycero-3-phosphocholine + H2O = sn-glycerol 3-phosphocholine + hexadecanoate + H(+). It catalyses the reaction 2 2-hexadecanoyl-sn-glycero-3-phosphocholine = 1,2-dihexadecanoyl-sn-glycero-3-phosphocholine + sn-glycerol 3-phosphocholine. It carries out the reaction 1-O-(9Z)-octadecenoyl-2-O-acetyl-sn-glycero-3-phosphocholine + H2O = 2-acetyl-sn-glycero-3-phosphocholine + (9Z)-octadecenoate + H(+). The catalysed reaction is a 1-acyl-sn-glycero-3-phospho-(1D-myo-inositol) + 1-hexadecanoyl-sn-glycero-3-phosphocholine = a 1-acyl-2-hexadecanoyl-sn-glycero-3-phospho-(1D-myo-inositol) + sn-glycerol 3-phosphocholine. The enzyme catalyses 2 2-(5Z,8Z,11Z,14Z)-eicosatetraenoyl-sn-glycero-3-phosphocholine = 1,2-di-(5Z,8Z,11Z,14Z-eicosatetraenoyl)-sn-glycero-3-phosphocholine + sn-glycerol 3-phosphocholine. Functionally, exhibits lysophospholipase, transacylase, PAF acetylhydrolase and asparaginase activities. Can catalyze three types of transacylation reactions: (1) acyl transfer from 1-acyl-sn-glycero-3-phosphocholine (1-acyl-GPC) to the sn-1(3) positions of glycerol and 2-acylglycerol (sn-1 to -1(3) transfer), (2) acyl transfer from 1-acyl-GPC to the sn-2 positions of 1-acyl-GPC, 1-acyl-sn-glycero-3-phosphoethanolamine (1-acyl-GPE), and other lysophospholipids (sn-1 to -2 transfer) and (3) acyl transfer from 2-acyl-GPC to the sn-1 position of 2-acyl-GPC and 2-acyl-GPE (sn-2 to -1 transfer). Mediates the synthesis of 1-arachidonoyl species of phospholipids by transferring the arachidonoyl residue from 2-arachidonoyl lysophospholipid to the sn-1 position of 2-acyl lysophospholipid. This is 60 kDa lysophospholipase (ASPG) from Homo sapiens (Human).